Consider the following 523-residue polypeptide: Na(+)/H(+) antiporter NhaB (523 aa).

The next 10 membrane-spanning stretches (helical) occupy residues phenylalanine 28 to valine 48, phenylalanine 51 to alanine 71, leucine 89 to valine 109, methionine 137 to isoleucine 157, phenylalanine 237 to valine 257, alanine 302 to isoleucine 322, threonine 347 to isoleucine 367, leucine 390 to valine 410, valine 445 to leucine 465, and methionine 476 to leucine 496.

The protein belongs to the NhaB Na(+)/H(+) (TC 2.A.34) antiporter family.

It is found in the cell inner membrane. The catalysed reaction is 2 Na(+)(in) + 3 H(+)(out) = 2 Na(+)(out) + 3 H(+)(in). Na(+)/H(+) antiporter that extrudes sodium in exchange for external protons. This chain is Na(+)/H(+) antiporter NhaB, found in Tolumonas auensis (strain DSM 9187 / NBRC 110442 / TA 4).